The chain runs to 104 residues: MDANNTFDSDLIHAIFKHIWARRFRERERSDAIDATEAEVALGTTKKNRLASANANALKLSCELLKSFVSEAVQRAAIIAEAEGMEKIEATHLERILPQLLLDF.

Belongs to the CENP-X/MHF2 family.

It localises to the nucleus. In terms of biological role, acts in the same pathway as FANCM to restrain class II meiotic crossing over (CO), and acts with FANCM during meiosis to repair interstrand cross-links (ICLs). The polypeptide is Protein MHF2 homolog (Arabidopsis thaliana (Mouse-ear cress)).